A 602-amino-acid polypeptide reads, in one-letter code: Rho family-interacting cell polarization regulator 2 (602 aa).

The segment at 46–73 (KKPQAKVKKMHNLGHKNSTTPKEPQPKR) is disordered. Over residues 48–59 (PQAKVKKMHNLG) the composition is skewed to basic residues. Positions 83–112 (NGLDEYLEVHQTELDKLTAQLKDMRRNSRL) form a coiled coil. Residues 173–421 (RESLTEINRS…TTAATQHRAL (249 aa)) are necessary for interaction with NCAM and myoblast protrusion formation. Residues 384 to 474 (GDLPYEDRVP…RSEVCQKPSN (91 aa)) form a disordered region. A compositionally biased stretch (polar residues) spans 403–416 (AHVSSSPDITTAAT). The span at 423–437 (SSESSSPDCSSSDSC) shows a compositional bias: low complexity.

The protein belongs to the RIPOR family. Homooligomer; homooligomerization is regulated by RHOC and leads to the formation of concatemers through the association of N- and C-termini. Interacts with NCAM.

Its subcellular location is the cytoplasm. It localises to the cytoskeleton. The protein localises to the cell projection. It is found in the filopodium. The protein resides in the apical cell membrane. Its subcellular location is the stereocilium. It localises to the stereocilium membrane. Acts as an inhibitor of the small GTPase RHOA and plays several roles in the regulation of myoblast and hair cell differentiation, lymphocyte T proliferation and neutrophil polarization. Plays a role in fetal mononuclear myoblast differentiation by promoting filopodia and myotube formation. Maintains naive T lymphocytes in a quiescent state and prevents chemokine-induced T lymphocyte responses, such as cell adhesion, polarization and migration. Involved also in the regulation of neutrophil polarization, chemotaxis and adhesion. Required for normal development of inner and outer hair cell stereocilia within the cochlea of the inner ear. Plays a role for maintaining the structural organization of the basal domain of stereocilia. Involved in mechanosensory hair cell function. Required for normal hearing. The protein is Rho family-interacting cell polarization regulator 2 of Gallus gallus (Chicken).